The sequence spans 291 residues: Ribosomal RNA small subunit methyltransferase A (291 aa).

S-adenosyl-L-methionine contacts are provided by Asn-28, Leu-30, Gly-55, Glu-77, Asp-103, and Asn-123.

This sequence belongs to the class I-like SAM-binding methyltransferase superfamily. rRNA adenine N(6)-methyltransferase family. RsmA subfamily.

It localises to the cytoplasm. The catalysed reaction is adenosine(1518)/adenosine(1519) in 16S rRNA + 4 S-adenosyl-L-methionine = N(6)-dimethyladenosine(1518)/N(6)-dimethyladenosine(1519) in 16S rRNA + 4 S-adenosyl-L-homocysteine + 4 H(+). Specifically dimethylates two adjacent adenosines (A1518 and A1519) in the loop of a conserved hairpin near the 3'-end of 16S rRNA in the 30S particle. May play a critical role in biogenesis of 30S subunits. The polypeptide is Ribosomal RNA small subunit methyltransferase A (Azorhizobium caulinodans (strain ATCC 43989 / DSM 5975 / JCM 20966 / LMG 6465 / NBRC 14845 / NCIMB 13405 / ORS 571)).